Here is a 354-residue protein sequence, read N- to C-terminus: COP9 signalosome complex subunit 5 (354 aa).

In terms of domain architecture, MPN spans 56–193; it reads VLVSSIALVK…IGAFRTYPKD (138 aa). Histidine 139, histidine 141, and aspartate 152 together coordinate Zn(2+). A JAMM motif motif is present at residues 139–152; the sequence is HSHPGYGCWLSGID. Residues 193–212 are disordered; that stretch reads DYKPPKKATKQNQDQSVPLS.

Belongs to the peptidase M67A family. CSN5 subfamily. Component of the COP9 signalosome (CSN) complex.

It is found in the cytoplasm. It localises to the nucleus. In terms of biological role, catalytic Component of the COP9 signalosome (CSN) complex that acts as an regulator of the ubiquitin (Ubl) conjugation pathway by mediating the deneddylation of the cullin subunit of SCF-type E3 ubiquitin-protein ligase complexes. The chain is COP9 signalosome complex subunit 5 (RRI1) from Yarrowia lipolytica (strain CLIB 122 / E 150) (Yeast).